The sequence spans 237 residues: Ribonuclease PH (237 aa).

Residues Arg86 and 124-126 (GTR) contribute to the phosphate site.

It belongs to the RNase PH family. In terms of assembly, homohexameric ring arranged as a trimer of dimers.

It catalyses the reaction tRNA(n+1) + phosphate = tRNA(n) + a ribonucleoside 5'-diphosphate. Its function is as follows. Phosphorolytic 3'-5' exoribonuclease that plays an important role in tRNA 3'-end maturation. Removes nucleotide residues following the 3'-CCA terminus of tRNAs; can also add nucleotides to the ends of RNA molecules by using nucleoside diphosphates as substrates, but this may not be physiologically important. Probably plays a role in initiation of 16S rRNA degradation (leading to ribosome degradation) during starvation. This Shewanella woodyi (strain ATCC 51908 / MS32) protein is Ribonuclease PH.